A 209-amino-acid polypeptide reads, in one-letter code: Protein lin-28 homolog A (209 aa).

The disordered stretch occupies residues 1–31; the sequence is MGSVSNQQFAGGCAKAAEKAPEEAPPDAARA. N-acetylglycine is present on Gly2. Ser3 bears the Phosphoserine mark. Positions 39 to 112 constitute a CSD domain; that stretch reads HGAGICKWFN…GLESIRVTGP (74 aa). A flexible linker region spans residues 113-136; sequence GGVFCIGSERRPKGKNMQKRRSKG. Ser120 bears the Phosphoserine mark. 2 CCHC-type zinc fingers span residues 137–154 and 159–176; these read DRCY…ECKL and KKCH…SCPL. Residues 177–209 form a disordered region; sequence KAQQGPSSQGKPAYFREEEEEIHSPALLPEAQN. Position 200 is a phosphoserine (Ser200).

Belongs to the lin-28 family. In terms of assembly, monomer. During skeletal muscle differentiation, associated with translation initiation complexes in the polysomal compartment. Directly interacts with EIF3S2. Interacts with NCL in an RNA-dependent manner. Interacts with TUT4 in the presence of pre-let-7 RNA. In terms of tissue distribution, expressed in embryonic stem cells (ES cells), spermatagonia and testis. Expressed in numerous epithelial tissues including the epithelia of the small intestine, the intralobular duct epithelium of the mammary gland and the epithelia of Henle's loop in the kidney and in the collecting duct (at protein level). Also expressed in the myocardium and skeletal muscle (at protein level).

It is found in the cytoplasm. Its subcellular location is the rough endoplasmic reticulum. It localises to the P-body. The protein localises to the stress granule. The protein resides in the nucleus. It is found in the nucleolus. Functionally, RNA-binding protein that inhibits processing of pre-let-7 miRNAs and regulates translation of mRNAs that control developmental timing, pluripotency and metabolism. Seems to recognize a common structural G-quartet (G4) feature in its miRNA and mRNA targets. 'Translational enhancer' that drives specific mRNAs to polysomes and increases the efficiency of protein synthesis. Its association with the translational machinery and target mRNAs results in an increased number of initiation events per molecule of mRNA and, indirectly, in mRNA stabilization. Binds IGF2 mRNA, MYOD1 mRNA, ARBP/36B4 ribosomal protein mRNA and its own mRNA. Essential for skeletal muscle differentiation program through the translational up-regulation of IGF2 expression. Suppressor of microRNA (miRNA) biogenesis, including that of let-7, miR107, miR-143 and miR-200c. Specifically binds the miRNA precursors (pre-miRNAs), recognizing an 5'-GGAG-3' motif found in pre-miRNA terminal loop, and recruits TUT4 and TUT7 uridylyltransferaseS. This results in the terminal uridylation of target pre-miRNAs. Uridylated pre-miRNAs fail to be processed by Dicer and undergo degradation. The repression of let-7 expression is required for normal development and contributes to maintain the pluripotent state by preventing let-7-mediated differentiation of embryonic stem cells. Localized to the periendoplasmic reticulum area, binds to a large number of spliced mRNAs and inhibits the translation of mRNAs destined for the ER, reducing the synthesis of transmembrane proteins, ER or Golgi lumen proteins, and secretory proteins. Binds to and enhances the translation of mRNAs for several metabolic enzymes, such as PFKP, PDHA1 or SDHA, increasing glycolysis and oxidative phosphorylation. Which, with the let-7 repression may enhance tissue repair in adult tissue. This chain is Protein lin-28 homolog A (Lin28a), found in Mus musculus (Mouse).